A 531-amino-acid chain; its full sequence is Polyamine aminopropyltransferase 1 (531 aa).

The next 7 helical transmembrane spans lie at 27 to 47 (FLLL…ELAL), 59 to 79 (VLQT…GSLA), 96 to 116 (GVLA…FAWL), 122 to 142 (AMIV…PLLM), 160 to 180 (MFAV…LFLL), 188 to 208 (GALV…VFIF), and 218 to 238 (AGLL…YVLA). Positions 205-476 (VFIFRRQTGR…VLARPGTEAP (272 aa)) are spermidine synthase. Residues 233 to 471 (TTYVLADDLE…GNWGFVLARP (239 aa)) form the PABS domain. Residue Gln263 coordinates S-methyl-5'-thioadenosine. Residues His298 and Asp320 each coordinate spermidine. Residues Glu340 and 374-375 (DA) each bind S-methyl-5'-thioadenosine. Asp392 serves as the catalytic Proton acceptor.

Belongs to the spermidine/spermine synthase family. As to quaternary structure, homodimer or homotetramer.

It localises to the cell membrane. It carries out the reaction S-adenosyl 3-(methylsulfanyl)propylamine + putrescine = S-methyl-5'-thioadenosine + spermidine + H(+). The protein operates within amine and polyamine biosynthesis; spermidine biosynthesis; spermidine from putrescine: step 1/1. In terms of biological role, catalyzes the irreversible transfer of a propylamine group from the amino donor S-adenosylmethioninamine (decarboxy-AdoMet) to putrescine (1,4-diaminobutane) to yield spermidine. This is Polyamine aminopropyltransferase 1 from Streptomyces coelicolor (strain ATCC BAA-471 / A3(2) / M145).